The sequence spans 125 residues: SKP1-like protein 7 (125 aa).

Residues 94 to 125 are interaction with the F-box domain of F-box proteins; the sequence is MNAAYDLHIKSLLALAYQTVADMVNDNKWAFE.

It belongs to the SKP1 family. As to quaternary structure, part of a SCF (SKP1-cullin-F-box) protein ligase complex. As to expression, restricted to siliques.

It is found in the nucleus. The protein operates within protein modification; protein ubiquitination. Its function is as follows. Involved in ubiquitination and subsequent proteasomal degradation of target proteins. Together with CUL1, RBX1 and a F-box protein, it forms a SCF E3 ubiquitin ligase complex. The functional specificity of this complex depends on the type of F-box protein. In the SCF complex, it serves as an adapter that links the F-box protein to CUL1. The polypeptide is SKP1-like protein 7 (ASK7) (Arabidopsis thaliana (Mouse-ear cress)).